The following is a 225-amino-acid chain: Cytidylate kinase (225 aa).

12–20 (GPSGAGKGT) serves as a coordination point for ATP.

Belongs to the cytidylate kinase family. Type 1 subfamily.

The protein resides in the cytoplasm. The catalysed reaction is CMP + ATP = CDP + ADP. It catalyses the reaction dCMP + ATP = dCDP + ADP. This is Cytidylate kinase from Vibrio cholerae serotype O1 (strain ATCC 39315 / El Tor Inaba N16961).